The following is a 313-amino-acid chain: DNA-directed RNA polymerase subunit alpha (313 aa).

The interval 1 to 226 (MLEIEKPKIE…EHMRLFLGLT (226 aa)) is alpha N-terminal domain (alpha-NTD). Residues 242-313 (TRDRLMDMSI…LGLSLRSSEE (72 aa)) form an alpha C-terminal domain (alpha-CTD) region.

This sequence belongs to the RNA polymerase alpha chain family. In terms of assembly, homodimer. The RNAP catalytic core consists of 2 alpha, 1 beta, 1 beta' and 1 omega subunit. When a sigma factor is associated with the core the holoenzyme is formed, which can initiate transcription.

The catalysed reaction is RNA(n) + a ribonucleoside 5'-triphosphate = RNA(n+1) + diphosphate. DNA-dependent RNA polymerase catalyzes the transcription of DNA into RNA using the four ribonucleoside triphosphates as substrates. The chain is DNA-directed RNA polymerase subunit alpha from Moorella thermoacetica (strain ATCC 39073 / JCM 9320).